We begin with the raw amino-acid sequence, 214 residues long: Large ribosomal subunit protein uL3 (214 aa).

Gln-153 is subject to N5-methylglutamine.

This sequence belongs to the universal ribosomal protein uL3 family. In terms of assembly, part of the 50S ribosomal subunit. Forms a cluster with proteins L14 and L19. Post-translationally, methylated by PrmB.

One of the primary rRNA binding proteins, it binds directly near the 3'-end of the 23S rRNA, where it nucleates assembly of the 50S subunit. This chain is Large ribosomal subunit protein uL3, found in Aromatoleum aromaticum (strain DSM 19018 / LMG 30748 / EbN1) (Azoarcus sp. (strain EbN1)).